The following is a 171-amino-acid chain: Peptide methionine sulfoxide reductase MsrA (171 aa).

The active site involves Cys13.

It belongs to the MsrA Met sulfoxide reductase family.

The enzyme catalyses L-methionyl-[protein] + [thioredoxin]-disulfide + H2O = L-methionyl-(S)-S-oxide-[protein] + [thioredoxin]-dithiol. It catalyses the reaction [thioredoxin]-disulfide + L-methionine + H2O = L-methionine (S)-S-oxide + [thioredoxin]-dithiol. Has an important function as a repair enzyme for proteins that have been inactivated by oxidation. Catalyzes the reversible oxidation-reduction of methionine sulfoxide in proteins to methionine. The chain is Peptide methionine sulfoxide reductase MsrA from Mycolicibacterium paratuberculosis (strain ATCC BAA-968 / K-10) (Mycobacterium paratuberculosis).